Consider the following 263-residue polypeptide: 3-methyl-2-oxobutanoate hydroxymethyltransferase (263 aa).

D46 and D85 together coordinate Mg(2+). 3-methyl-2-oxobutanoate-binding positions include 46 to 47 (DS), D85, and K115. E117 is a binding site for Mg(2+). E180 serves as the catalytic Proton acceptor.

This sequence belongs to the PanB family. As to quaternary structure, homodecamer; pentamer of dimers. Requires Mg(2+) as cofactor.

It localises to the cytoplasm. It carries out the reaction 3-methyl-2-oxobutanoate + (6R)-5,10-methylene-5,6,7,8-tetrahydrofolate + H2O = 2-dehydropantoate + (6S)-5,6,7,8-tetrahydrofolate. The protein operates within cofactor biosynthesis; (R)-pantothenate biosynthesis; (R)-pantoate from 3-methyl-2-oxobutanoate: step 1/2. Its function is as follows. Catalyzes the reversible reaction in which hydroxymethyl group from 5,10-methylenetetrahydrofolate is transferred onto alpha-ketoisovalerate to form ketopantoate. This Corynebacterium diphtheriae (strain ATCC 700971 / NCTC 13129 / Biotype gravis) protein is 3-methyl-2-oxobutanoate hydroxymethyltransferase.